Here is a 248-residue protein sequence, read N- to C-terminus: PF03932 family protein CutC (248 aa).

This sequence belongs to the CutC family. Homodimer.

The protein localises to the cytoplasm. This is PF03932 family protein CutC from Shigella dysenteriae serotype 1 (strain Sd197).